A 420-amino-acid chain; its full sequence is CinA-like protein (420 aa).

The protein belongs to the CinA family.

The chain is CinA-like protein from Chloroherpeton thalassium (strain ATCC 35110 / GB-78).